The primary structure comprises 164 residues: UPF0114 protein YqhA (164 aa).

3 consecutive transmembrane segments (helical) span residues 15 to 35 (LLAP…LKFF), 53 to 73 (LILV…LVMV), and 136 to 156 (LMWY…MGYL).

Belongs to the UPF0114 family.

Its subcellular location is the cell membrane. The protein is UPF0114 protein YqhA of Escherichia coli O6:H1 (strain CFT073 / ATCC 700928 / UPEC).